Here is a 478-residue protein sequence, read N- to C-terminus: Zinc metalloproteinase/disintegrin ussurin (478 aa).

A signal peptide spans 1–20; the sequence is MIQVLLVTICLAAFPYQGSS. A propeptide spanning residues 21-190 is cleaved from the precursor; that stretch reads IILESGNVND…KKASPLVVTT (170 aa). In terms of domain architecture, Peptidase M12B spans 193–389; the sequence is RYVELVVVAD…RNPQCILNKP (197 aa). Positions 196 and 280 each coordinate Ca(2+). Intrachain disulfides connect C304/C384, C344/C368, and C346/C351. Zn(2+) is bound at residue H329. Residue E330 is part of the active site. Positions 333 and 339 each coordinate Zn(2+). Ca(2+) contacts are provided by C384 and N387. The propeptide occupies 390 to 413; that stretch reads LRTDIVSTPVSGNELLEAGEECDC. The region spanning 397-478 is the Disintegrin domain; the sequence is TPVSGNELLE…AGCPRNPFHA (82 aa). Cystine bridges form between C411–C426, C413–C421, C420–C443, C434–C440, C439–C464, and C452–C471. Residues 456–458 carry the Cell attachment site motif; that stretch reads RGD.

Belongs to the venom metalloproteinase (M12B) family. P-II subfamily. P-IIa sub-subfamily. As to quaternary structure, monomer. It depends on Zn(2+) as a cofactor. As to expression, expressed by the venom gland.

It localises to the secreted. In terms of biological role, impairs hemostasis in the envenomed animal. Functionally, inhibits platelet aggregation induced by ADP, thrombin, platelet-activating factor and collagen. Acts by inhibiting fibrinogen interaction with platelet receptors GPIIb/GPIIIa (ITGA2B/ITGB3). This Gloydius ussuriensis (Ussuri mamushi) protein is Zinc metalloproteinase/disintegrin ussurin.